Consider the following 378-residue polypeptide: Putative F-box protein At3g24580 (378 aa).

The F-box domain occupies Met-1–His-47.

This Arabidopsis thaliana (Mouse-ear cress) protein is Putative F-box protein At3g24580.